The chain runs to 91 residues: uncharacterized protein (91 aa).

A helical transmembrane segment spans residues 7 to 23; it reads IALVGVVVVLFGALRYQ.

It localises to the membrane. This is an uncharacterized protein from Haemophilus influenzae (strain ATCC 51907 / DSM 11121 / KW20 / Rd).